The primary structure comprises 372 residues: Steroid C26-monooxygenase (372 aa).

A heme-binding site is contributed by Cys314.

It belongs to the cytochrome P450 family. It depends on heme as a cofactor.

It catalyses the reaction cholest-4-en-3-one + 6 reduced [2Fe-2S]-[ferredoxin] + 3 O2 + 5 H(+) = (25R)-3-oxocholest-4-en-26-oate + 6 oxidized [2Fe-2S]-[ferredoxin] + 4 H2O. Its pathway is steroid metabolism; cholesterol degradation. Functionally, involved in the utilization of cholesterol as the sole carbon and energy source by degrading the side chain during infection. Primarily catalyzes the sequential oxidation of the terminal methyl of cholest-4-en-3-one into (25R)-26-hydroxycholest-4-en-3-one (alcohol), (25R)-26-oxocholest-4-en-3-one (aldehyde), to finally yield the carboxylic acid (25R)-3-oxocholest-4-en-26-oate. Also able to sequentially oxidize cholesterol itself, not only cholest-4-en-3-one. This Mycobacterium tuberculosis (strain CDC 1551 / Oshkosh) protein is Steroid C26-monooxygenase (cyp142).